We begin with the raw amino-acid sequence, 285 residues long: RNase adapter protein RapZ (285 aa).

An ATP-binding site is contributed by Gly8–Ser15. Position 56 to 59 (Asp56 to Asn59) interacts with GTP. Residues Arg266 to Ser285 form an RNA-binding region.

It belongs to the RapZ-like family. RapZ subfamily. As to quaternary structure, homotrimer.

Modulates the synthesis of GlmS, by affecting the processing and stability of the regulatory small RNA GlmZ. When glucosamine-6-phosphate (GlcN6P) concentrations are high in the cell, RapZ binds GlmZ and targets it to cleavage by RNase E. Consequently, GlmZ is inactivated and unable to activate GlmS synthesis. Under low GlcN6P concentrations, RapZ is sequestered and inactivated by an other regulatory small RNA, GlmY, preventing GlmZ degradation and leading to synthesis of GlmS. The chain is RNase adapter protein RapZ from Pectobacterium atrosepticum (strain SCRI 1043 / ATCC BAA-672) (Erwinia carotovora subsp. atroseptica).